Reading from the N-terminus, the 447-residue chain is Glutamyl-tRNA reductase (447 aa).

Residues 49-52 (TCNR), Ser-109, 114-116 (EQQ), and Gln-120 contribute to the substrate site. Cys-50 functions as the Nucleophile in the catalytic mechanism. Residue 189–194 (GAGSMG) coordinates NADP(+).

The protein belongs to the glutamyl-tRNA reductase family. Homodimer.

The catalysed reaction is (S)-4-amino-5-oxopentanoate + tRNA(Glu) + NADP(+) = L-glutamyl-tRNA(Glu) + NADPH + H(+). It functions in the pathway porphyrin-containing compound metabolism; protoporphyrin-IX biosynthesis; 5-aminolevulinate from L-glutamyl-tRNA(Glu): step 1/2. Its function is as follows. Catalyzes the NADPH-dependent reduction of glutamyl-tRNA(Glu) to glutamate 1-semialdehyde (GSA). The chain is Glutamyl-tRNA reductase from Mycobacterium sp. (strain JLS).